The chain runs to 439 residues: MRRAALRLCALGKGQLTPGRGLTQGPQNPKKQGIFHIHEVRDKLREIVGASTNWRDHVKAMEERKLLHSFLAKSQDGLPPRRMKDSYIEVLLPLGSEPELREKYLTVQNTVRFGRILEDLDSLGVLICYMHNKIHSAKMSPLSIVTALVDKIDMCKKSLSPEQDIKFSGHVSWVGKTSMEVKMQMFQLHGDEFCPVLDATFVMVARDSENKGPAFVNPLIPESPEEEELFRQGELNKGRRIAFSSTSLLKMAPSAEERTTIHEMFLSTLDPKTISFRSRVLPSNAVWMENSKLKSLEICHPQERNIFNRIFGGFLMRKAYELAWATACSFGGSRPFVVAVDDIMFQKPVEVGSLLFLSSQVCFTQNNYIQVRVHSEVASLQEKQHTTTNVFHFTFMSEKEVPLVFPKTYGESMLYLDGQRHFNSMSGPATLRKDYLVEP.

The N-terminal 21 residues, 1–21, are a transit peptide targeting the mitochondrion; it reads MRRAALRLCALGKGQLTPGRG. HotDog ACOT-type domains lie at 84-209 and 289-401; these read KDSY…RDSE and ENSK…EKEV. The residue at position 103 (Lys103) is an N6-acetyllysine.

This sequence belongs to the acyl coenzyme A hydrolase family. In terms of assembly, interacts with NYAP1, NYAP2 and MYO16.

It localises to the mitochondrion. It is found in the mitochondrion matrix. The protein resides in the mitochondrion inner membrane. The catalysed reaction is butanoyl-CoA + H2O = butanoate + CoA + H(+). The enzyme catalyses propanoyl-CoA + H2O = propanoate + CoA + H(+). It carries out the reaction hexadecanoyl-CoA + H2O = hexadecanoate + CoA + H(+). It catalyses the reaction octanoyl-CoA + H2O = octanoate + CoA + H(+). The catalysed reaction is decanoyl-CoA + H2O = decanoate + CoA + H(+). The enzyme catalyses tetradecanoyl-CoA + H2O = tetradecanoate + CoA + H(+). It carries out the reaction 4,8-dimethylnonanoyl-CoA + H2O = 4,8-dimethylnonanoate + CoA + H(+). It catalyses the reaction 3-methylbutanoyl-CoA + H2O = 3-methylbutanoate + CoA + H(+). The catalysed reaction is 2-methylpropanoyl-CoA + H2O = 2-methylpropanoate + CoA + H(+). Its pathway is lipid metabolism; fatty acid metabolism. With respect to regulation, strongly inhibited by NADH and CoA. Its function is as follows. Mitochondrial acyl-CoA thioesterase. Catalyzes the hydrolysis of acyl-CoAs into free fatty acids and coenzyme A (CoA), regulating their respective intracellular levels. Regulates both mitochondrial lipid and amino acid metabolism. The sequence is that of Acyl-coenzyme A thioesterase 9, mitochondrial from Homo sapiens (Human).